A 272-amino-acid polypeptide reads, in one-letter code: Small ribosomal subunit protein uS2 (272 aa).

The segment at 244–272 (EDDYEGAEGDLDLDSANEEESLEDNNEEE) is disordered.

Belongs to the universal ribosomal protein uS2 family.

In Trichodesmium erythraeum (strain IMS101), this protein is Small ribosomal subunit protein uS2.